Reading from the N-terminus, the 426-residue chain is Potassium channel subfamily K member 2 (426 aa).

Over 1–61 the chain is Cytoplasmic; sequence MLPSASRERP…TTINVMKWKT (61 aa). 2 important for GNG4 binding and L-glutamate release in astrocytes regions span residues 17–38 and 51–61; these read AAPD…LSFS and DTTINVMKWKT. A helical membrane pass occupies residues 62-82; it reads VSTIFLVVVLYLIIGATVFKA. Residues N110 and N134 are each glycosylated (N-linked (GlcNAc...) asparagine). An intramembrane region (pore-forming) is located at residues 144 to 170; sequence LGSSFFFAGTVITTIGFGNISPRTEGG. K(+) contacts are provided by T157, I158, G159, and F160. The selectivity filter 1 stretch occupies residues 157-162; sequence TIGFGN. A helical membrane pass occupies residues 172–192; that stretch reads IFCIIYALLGIPLFGFLLAGV. The Cytoplasmic segment spans residues 193 to 223; it reads GDQLGTIFGKGIAKVEDTFIKWNVSQTKIRI. The chain crosses the membrane as a helical span at residues 224–244; the sequence is ISTIIFILFGCVLFVALPAII. Residues 253–283 constitute an intramembrane region (pore-forming); sequence ALDAIYFVVITLTTIGFGDYVAGGSDIEYLD. T266, I267, G268, and F269 together coordinate K(+). The segment at 266-271 is selectivity filter 2; it reads TIGFGD. The helical transmembrane segment at 288-308 threads the bilayer; it reads VVWFWILVGLAYFAAVLSMIG. Residues 309–426 lie on the Cytoplasmic side of the membrane; that stretch reads DWLRVISKKT…EEIAVIENIK (118 aa). The interval 313-326 is interaction with AKAP5; that stretch reads VISKKTKEEVGEFR. The essential for chloroform and halothane sensitivity stretch occupies residues 337-385; sequence TAEFKETRRRLSVEIYDKFQRATSIKRKLSAELAGNHNQELTPCRRTLS. The residue at position 348 (S348) is a Phosphoserine; by PKA.

It belongs to the two pore domain potassium channel (TC 1.A.1.8) family. Homodimer; disulfide-linked. Forms heterodimers with other 2-pore domain K(+) channel subunits, such as KCNK1, KCNK4, KCNK10 and KCNK18. Interacts with AKAP5; the channel is recruited to postsynaptic microdomains by AKAP5 where it can integrate neurotransmitter receptor signals. Part of a complex composed of AKAP5 and ADRB2. Upon AKAP5 binding, the channel is no longer sensitive to intracellular acidification, membrane stretch or arachidonic acid stimuli. Interacts with POPDC1; the interaction enhances KCNK2 surface expression and is inhibited by cAMP. Interacts (via N-terminus) with G-protein subunit GNG4 (via C-terminus); this interaction confers ion selectivity to L-glutamate and Cl(-) anions. In terms of processing, phosphorylation at Ser-348 controls the reversible conversion from a leak channel to a voltage-dependent channel. In terms of tissue distribution, detected in kidney, adrenal gland and brain where it is preferentially expressed in the amygdala but not found in thalamus, hypothalamus, hippocampus or substantia nigra.

The protein localises to the cell membrane. It is found in the endoplasmic reticulum membrane. It localises to the cell projection. Its subcellular location is the axon. The protein resides in the dendrite. The protein localises to the postsynaptic density membrane. It is found in the sarcolemma. It catalyses the reaction K(+)(in) = K(+)(out). The catalysed reaction is L-glutamate(out) = L-glutamate(in). It carries out the reaction chloride(in) = chloride(out). The enzyme catalyses Rb(+)(in) = Rb(+)(out). It catalyses the reaction Cs(+)(in) = Cs(+)(out). Its activity is regulated as follows. Activated by various stimuli including intracellular acidic pH, mechanical stretch and polyunsaturated fatty acids such as arachidonic acid. Activated by volatile anesthetics such as chloroform, halothane, and isoflurane. In terms of biological role, k(+) channel that conducts voltage-dependent outward rectifying currents upon membrane depolarization. Voltage sensing is coupled to K(+) electrochemical gradient in an 'ion flux gating' mode where outward but not inward ion flow opens the gate. Converts to voltage-independent 'leak' conductance mode upon stimulation by various stimuli including mechanical membrane stretch, acidic pH, heat and lipids. Reversibly converts between a voltage-insensitive K(+) 'leak' channel and a voltage-dependent outward rectifying K(+) channel in a phosphorylation-dependent manner. Homo- and heterodimerizes to form functional channels with distinct regulatory and gating properties. In trigeminal ganglia sensory neurons, the heterodimer of KCNK2/TREK-1 and KCNK18/TRESK inhibits neuronal firing and neurogenic inflammation by stabilizing the resting membrane potential at K(+) equilibrium potential as well as by regulating the threshold of action potentials and the spike frequency. At trigeminal A-beta afferent nerves, the heterodimer of KCNK2/TREK-1 and KCNK4/TRAAK is mostly coexpressed at nodes of Ranvier where it conducts voltage-independent mechanosensitive and thermosensitive currents, allowing rapid action potential repolarization, high speed and high frequence saltatory conduction on myelinated nerves to ensure prompt sensory responses. In hippocampal astrocytes, the heterodimer of KCNK2/TREK-1 and KCNK1/TWIK-1 allows passive K(+) conductance under basal conditions, but changes ion selectivity and becomes permeable to L-glutamate and Cl(-) ions upon binding to G-protein subunit GNG4 in stimulated astrocytes. Mediates rapid L-glutamate release in response to activation of G-protein-coupled receptors, such as F2R and CNR1. In hippocampal pyramidal neurons, the homodimer of KCNK2/TREK-1 contributes to gamma-aminobutyric acid (GABA) B-induced slow inhibitory postsynaptic potential. Associates with AKAP5 and Gs-protein-coupled receptor B2AR at postsynaptic dense bodies and converts to a leak channel no longer sensitive to stimulation by arachidonic acid, acidic pH or mechanical stress, nor inhibited by Gq-coupled receptors but still under the negative control of Gs-coupled receptors. Permeable to other monovalent cations such as Rb(+) and Cs(+). Functionally, does not display channel activity but reduces the channel activity of isoform 1 and isoform 2 and reduces cell surface expression of isoform 2. The polypeptide is Potassium channel subfamily K member 2 (Homo sapiens (Human)).